A 785-amino-acid chain; its full sequence is Adhesion G-protein coupled receptor G7 (785 aa).

The signal sequence occupies residues 1-26 (MRSCRSCNVRVLVAIVCGLLTGIVLG). The Extracellular segment spans residues 27 to 435 (LGIWRMVIRI…KYPKSLDILS (409 aa)). N-linked (GlcNAc...) asparagine glycans are attached at residues asparagine 82, asparagine 122, asparagine 133, asparagine 152, asparagine 159, asparagine 178, asparagine 195, asparagine 239, asparagine 289, asparagine 348, asparagine 400, and asparagine 408. The GAIN-B domain occupies 271-425 (FSVQKGSSNS…AVLMSFKKDY (155 aa)). Disulfide bonds link cysteine 380–cysteine 407 and cysteine 395–cysteine 409. Residues 380-425 (CVYWNFLINDWDTQGCQKTGNTTEFLRCNCSHTTNFAVLMSFKKDY) are GPS. A helical transmembrane segment spans residues 436 to 456 (NIGCALSIAGLALTILFQILT). The Cytoplasmic portion of the chain corresponds to 457 to 465 (RKIRKTSVT). A helical membrane pass occupies residues 466–486 (WVLVSLCSSMLIFNLLFVFGI). Residues 487 to 523 (ENSNKNLKTSDSDINVKPENNKIPESDTIETPNPSCT) lie on the Extracellular side of the membrane. Residues 524-544 (AIAALLHYFLLVTFTWNGLSA) traverse the membrane as a helical segment. At 545–561 (TQLYFLLIRTMKPLPRH) the chain is on the cytoplasmic side. Residues 562–582 (FIIFISLVGWGVPAIIVGVTI) traverse the membrane as a helical segment. Topologically, residues 583–623 (GSIYALSGNKRYWELDYRQEEICWLAVPKDNDYARSPLLWS) are extracellular. A helical transmembrane segment spans residues 624–644 (FIIPVTIILITNITIFVIITV). Residues 645-668 (KVLWKNNQNLTSTKKVSSLKKVFS) are Cytoplasmic-facing. The chain crosses the membrane as a helical span at residues 669–689 (TLSIAVVFGVTWILAYAMLIS). The Extracellular segment spans residues 690–694 (NDDIR). A helical transmembrane segment spans residues 695 to 715 (IVFSYIFCLFNTTQGLQIFIL). The Cytoplasmic portion of the chain corresponds to 716–785 (YTVRTKVFQS…SGMTEETSLS (70 aa)).

Belongs to the G-protein coupled receptor 2 family. Adhesion G-protein coupled receptor (ADGR) subfamily. Selectively expressed in the intestinal tissues.

The protein resides in the membrane. Orphan receptor. The protein is Adhesion G-protein coupled receptor G7 (Adgrg7) of Mus musculus (Mouse).